The chain runs to 115 residues: NADH-ubiquinone oxidoreductase chain 3 (115 aa).

3 consecutive transmembrane segments (helical) span residues 3 to 23, 55 to 75, and 87 to 107; these read LMLT…IAFW, FFLV…LLPL, and VLFM…YEWI.

The protein belongs to the complex I subunit 3 family. In terms of assembly, core subunit of respiratory chain NADH dehydrogenase (Complex I) which is composed of 45 different subunits. Interacts with TMEM186. Interacts with TMEM242.

The protein resides in the mitochondrion inner membrane. It carries out the reaction a ubiquinone + NADH + 5 H(+)(in) = a ubiquinol + NAD(+) + 4 H(+)(out). Core subunit of the mitochondrial membrane respiratory chain NADH dehydrogenase (Complex I) which catalyzes electron transfer from NADH through the respiratory chain, using ubiquinone as an electron acceptor. Essential for the catalytic activity of complex I. The sequence is that of NADH-ubiquinone oxidoreductase chain 3 from Dugong dugon (Dugong).